A 295-amino-acid chain; its full sequence is Ribose-phosphate pyrophosphokinase (295 aa).

Residues 46 to 48 and 101 to 102 each bind ATP; these read DGE and RQ. Positions 132 and 171 each coordinate Mg(2+). The active site involves Lys-194. The D-ribose 5-phosphate site is built by Arg-196 and Asp-220.

It belongs to the ribose-phosphate pyrophosphokinase family. Class III (archaeal) subfamily. Requires Mg(2+) as cofactor.

The protein resides in the cytoplasm. The enzyme catalyses D-ribose 5-phosphate + ATP = 5-phospho-alpha-D-ribose 1-diphosphate + AMP + H(+). It functions in the pathway metabolic intermediate biosynthesis; 5-phospho-alpha-D-ribose 1-diphosphate biosynthesis; 5-phospho-alpha-D-ribose 1-diphosphate from D-ribose 5-phosphate (route I): step 1/1. Functionally, involved in the biosynthesis of the central metabolite phospho-alpha-D-ribosyl-1-pyrophosphate (PRPP) via the transfer of pyrophosphoryl group from ATP to 1-hydroxyl of ribose-5-phosphate (Rib-5-P). This Methanosarcina mazei (strain ATCC BAA-159 / DSM 3647 / Goe1 / Go1 / JCM 11833 / OCM 88) (Methanosarcina frisia) protein is Ribose-phosphate pyrophosphokinase.